The chain runs to 85 residues: NADH-ubiquinone oxidoreductase chain 4L (85 aa).

The next 2 membrane-spanning stretches (helical) occupy residues 21–41 (LLVT…LLVY) and 51–71 (FIFL…LVSL).

This sequence belongs to the complex I subunit 4L family.

Its subcellular location is the mitochondrion membrane. It carries out the reaction a ubiquinone + NADH + 5 H(+)(in) = a ubiquinol + NAD(+) + 4 H(+)(out). In terms of biological role, core subunit of the mitochondrial membrane respiratory chain NADH dehydrogenase (Complex I) that is believed to belong to the minimal assembly required for catalysis. Complex I functions in the transfer of electrons from NADH to the respiratory chain. The immediate electron acceptor for the enzyme is believed to be ubiquinone. This Artemia franciscana (Brine shrimp) protein is NADH-ubiquinone oxidoreductase chain 4L (ND4L).